An 89-amino-acid polypeptide reads, in one-letter code: Small ribosomal subunit protein uS14 (89 aa).

Belongs to the universal ribosomal protein uS14 family. In terms of assembly, part of the 30S ribosomal subunit. Contacts proteins S3 and S10.

Binds 16S rRNA, required for the assembly of 30S particles and may also be responsible for determining the conformation of the 16S rRNA at the A site. In Latilactobacillus sakei subsp. sakei (strain 23K) (Lactobacillus sakei subsp. sakei), this protein is Small ribosomal subunit protein uS14.